The following is a 303-amino-acid chain: Carboxypeptidase B (303 aa).

A Peptidase M14 domain is found at 5-298 (SYHDYDEINA…EGVKVVANFV (294 aa)). The Zn(2+) site is built by histidine 63 and glutamate 66. Substrate is bound by residues 63–66 (HARE), arginine 118, and 136–137 (NR). A Zn(2+)-binding site is contributed by histidine 189. Substrate-binding positions include 190 to 191 (SY) and tyrosine 241. Residue glutamate 264 is the Proton donor/acceptor of the active site.

The protein belongs to the peptidase M14 family. Requires Zn(2+) as cofactor.

It is found in the secreted. It carries out the reaction Preferential release of a C-terminal lysine or arginine amino acid.. The protein is Carboxypeptidase B of Astacus astacus (Noble crayfish).